The sequence spans 151 residues: uncharacterized protein (151 aa).

This is an uncharacterized protein from Escherichia coli.